We begin with the raw amino-acid sequence, 208 residues long: MRITLVDHPLVQHKLAHLRDKRTGPKDFRELAEEVAMLMAYEAMRDLELEETTVETPIAPARVKVLSGKKLALVAILRAGLVMVEGILKLVPHARVGHIGLYRDPESLNPVQYYIKLPPDIAERRAFLLDPMLATGGSASLALSLLKERGATGVKLMAILAAPEGLERIAKDHPDTEVVVAAIDERLNDHGYIVPGLGDAGDRIYGTK.

Residues Arg78, Arg103, and Asp130–Ser138 contribute to the 5-phospho-alpha-D-ribose 1-diphosphate site. Uracil is bound by residues Ile193 and Gly198–Ala200. Asp199 is a 5-phospho-alpha-D-ribose 1-diphosphate binding site.

The protein belongs to the UPRTase family. Mg(2+) is required as a cofactor.

The catalysed reaction is UMP + diphosphate = 5-phospho-alpha-D-ribose 1-diphosphate + uracil. Its pathway is pyrimidine metabolism; UMP biosynthesis via salvage pathway; UMP from uracil: step 1/1. Its activity is regulated as follows. Allosterically activated by GTP. Its function is as follows. Catalyzes the conversion of uracil and 5-phospho-alpha-D-ribose 1-diphosphate (PRPP) to UMP and diphosphate. The protein is Uracil phosphoribosyltransferase of Thermus thermophilus (strain ATCC 27634 / DSM 579 / HB8).